A 304-amino-acid chain; its full sequence is MSLNPPIFLKRSEENNSKFVETKQSQTTSIASEDPLQNLCLASQEVLQKAQQSGRSKCLKCGGSRMFYCYTCYVPVENVPIEQIPLVKLPLKIDIIKHPNETDGKSTAIHAKLLAPEFVNIYTYPCIPEYEEKDHEVALVFPGPQSISIKDISFHLQKRIQNNVRGKNDDPDKPSFKRKRAEEQEFCDLNDSKCKGTTLKKIIFIDSTWNQTNKIFTDERLQGLLQVELKTRKTCFWRHQKGKPDTFLSTIEAIYYFLVDYHTDILKEKYRGQYDNLLFFYSFMYQLIKNAKCSGDKETGKLTH.

Serine 2 is subject to N-acetylserine. The DXTW signature appears at aspartate 206–tryptophan 209.

It belongs to the TDD superfamily. DTWD1 family.

The protein resides in the nucleus. The catalysed reaction is a uridine in tRNA + S-adenosyl-L-methionine = a 3-[(3S)-3-amino-3-carboxypropyl]uridine in tRNA + S-methyl-5'-thioadenosine + H(+). Catalyzes the formation of 3-(3-amino-3-carboxypropyl)uridine (acp3U) at position 20 in the D-loop of several cytoplasmic tRNAs (acp3U(20)). The polypeptide is tRNA-uridine aminocarboxypropyltransferase 1 (Pongo abelii (Sumatran orangutan)).